Consider the following 1219-residue polypeptide: Regulator of telomere elongation helicase 1 (1219 aa).

The Helicase ATP-binding domain maps to 7-296; that stretch reads NGVTVDFPFQ…TKAAQQGEPH (290 aa). 42 to 49 serves as a coordination point for ATP; that stretch reads SPTGTGKT. C145, C163, C172, and C207 together coordinate [4Fe-4S] cluster. The Nuclear localization signal signature appears at 151-167; the sequence is KKQESNHLQIHLCRKKV. The DEAH box motif lies at 250 to 253; sequence DEAH. 7 disordered regions span residues 287–306, 757–786, 839–877, 979–1005, 1017–1054, 1132–1151, and 1159–1219; these read TKAA…SPSP, PAPA…FFST, EHSE…GRKK, RPEH…PDPK, DPQE…RAGK, CTDL…PQEE, and LTHR…EWGL. Residues 757–766 are compositionally biased toward low complexity; it reads PAPAPRATAP. Basic and acidic residues predominate over residues 863 to 873; it reads SEKRPAEEPRG. A Nuclear localization signal motif is present at residues 871 to 877; that stretch reads PRGGRKK. The segment covering 1176 to 1185 has biased composition (polar residues); sequence KTQSKISSFL. Positions 1178–1185 match the PIP-box motif; sequence QSKISSFL. Residues 1200–1219 show a composition bias toward low complexity; it reads AGPSQSSGPPHGPAASEWGL.

This sequence belongs to the helicase family. RAD3/XPD subfamily. As to quaternary structure, interacts with TERF1. Interacts (via PIP-box) with PCNA; the interaction is direct and essential for suppressing telomere fragility. Interacts with MMS19; the interaction mediates the association of RTEL1 with the cytosolic iron-sulfur protein assembly (CIA) complex.

It is found in the nucleus. It carries out the reaction ATP + H2O = ADP + phosphate + H(+). In terms of biological role, a probable ATP-dependent DNA helicase implicated in telomere-length regulation, DNA repair and the maintenance of genomic stability. Acts as an anti-recombinase to counteract toxic recombination and limit crossover during meiosis. Regulates meiotic recombination and crossover homeostasis by physically dissociating strand invasion events and thereby promotes noncrossover repair by meiotic synthesis dependent strand annealing (SDSA) as well as disassembly of D loop recombination intermediates. Also disassembles T loops and prevents telomere fragility by counteracting telomeric G4-DNA structures, which together ensure the dynamics and stability of the telomere. The chain is Regulator of telomere elongation helicase 1 from Homo sapiens (Human).